The chain runs to 83 residues: Prolactin-releasing peptide (83 aa).

Positions 1-21 (MALKTWLLCLLLLSLVLPGAS) are cleaved as a signal peptide. F52 is modified (phenylalanine amide). A propeptide spanning residues 57–83 (ATPRDVTGLGQLSCLPLDGRTKFSQRG) is cleaved from the precursor.

As to expression, widely expressed, with highest levels in medulla oblongata and hypothalamus.

It is found in the secreted. Stimulates prolactin (PRL) release and regulates the expression of prolactin through its receptor GPR10. May stimulate lactotrophs directly to secrete PRL. This Rattus norvegicus (Rat) protein is Prolactin-releasing peptide (Prlh).